We begin with the raw amino-acid sequence, 118 residues long: uncharacterized protein (118 aa).

The next 3 membrane-spanning stretches (helical) occupy residues Ile-22–Ala-44, Leu-54–Arg-71, and Pro-78–Leu-99.

It is found in the cell membrane. This is an uncharacterized protein from Archaeoglobus fulgidus (strain ATCC 49558 / DSM 4304 / JCM 9628 / NBRC 100126 / VC-16).